Consider the following 221-residue polypeptide: MAGGGQVVLRTLSQQGWVRGSGAAVLSRLQDAAVVRPGFLSTAEEETLSRELEPELRRRRYEYDHWDAAIHGFRETEKSRWSEASRAILRRVQAAAFGPGQTLLSSVHVLDLEPQGYIKPHVDSIKFCGSTIAGLSLLSPSVMRLVHTQEPGEWLELLLEPGSLYILRGSARYDFSHEILRDEESFFGERRIPRGRRISVICRSLPEGMGPGEPGQLPPAC.

A mitochondrion-targeting transit peptide spans 1–23 (MAGGGQVVLRTLSQQGWVRGSGA). Fe cation is bound by residues H121 and D123. Y165 contacts 2-oxoglutarate. H177 contacts Fe cation. 2-oxoglutarate contacts are provided by residues 197-199 (RIS) and R203.

Belongs to the alkB family. Fe(2+) serves as cofactor.

It is found in the mitochondrion matrix. May function as protein hydroxylase; can catalyze auto-hydroxylation at Leu-110 (in vitro), but this activity may be due to the absence of the true substrate. Required to induce programmed necrosis in response to DNA damage caused by cytotoxic alkylating agents. Acts by triggering the collapse of mitochondrial membrane potential and loss of mitochondrial function that leads to energy depletion and cell death. ALKBH7-mediated necrosis is probably required to prevent the accumulation of cells with DNA damage. Does not display DNA demethylase activity. Involved in fatty acid metabolism. In Bos taurus (Bovine), this protein is Alpha-ketoglutarate-dependent dioxygenase alkB homolog 7, mitochondrial (ALKBH7).